Reading from the N-terminus, the 887-residue chain is Oxysterol-binding protein-related protein 3 (887 aa).

A disordered region spans residues 1 to 35 (MMSDEKNLGVSQKLVSPSRSTSSCSSKQGSRQDSW). A phosphoserine mark is found at Ser-16 and Ser-34. The segment covering 16-32 (SPSRSTSSCSSKQGSRQ) has biased composition (low complexity). The PH domain maps to 51–146 (PPVQKGFLLK…WVSKLRHHRM (96 aa)). Positions 161–167 (HFFSGST) match the FFAT 1 motif. Phosphoserine occurs at positions 200, 251, and 265. The interval 261 to 326 (GSFESPKKEK…KNYSDGSETS (66 aa)) is disordered. The span at 268–280 (KEKRSHRRWRSRA) shows a compositional bias: basic residues. 10 positions are modified to phosphoserine: Ser-304, Ser-309, Ser-320, Ser-323, Ser-371, Ser-372, Ser-410, Ser-425, Ser-437, and Ser-440. The FFAT 2 motif lies at 450–454 (EFFDA).

It belongs to the OSBP family. In terms of assembly, homodimer. Interacts with RRAS. Interacts (phosphorylated form) with VAPA. Interacts with OSBPL6. In terms of processing, phosphorylation is enhanced in vitro by phorbol-12-myristate-13-acetate (PMA), forskolin and calcium ionophore A23187. Phosphorylation seems to be stimulated in conditions of low cell-cell (or cell-matrix) adhesion. Expressed in a subset of small lymphocytes (at protein level). Expressed at high concentration in kidney, lymph node and thymus. Expressed at moderate concentration in stomach, jejunum, ileum, appendix, spleen, leukocytes, trachea, lung and thyroid gland. Expressed at low concentration in whole brain, esophagus, duodenum, ileocecum, colon, skeletal muscle, bone marrow, placenta and mammary gland. Isoform 1a, isoform 1b, isoform 1c and isoform 1d are highly expressed in brain, bone marrow, colon, kidney, lung, skeletal muscle, spleen, thymus and thyroid. Not expressed in heart and liver. Isoform 2a, isoform 2b, isoform 2c and isoform 2d are expressed in brain, bone marrow, kidney, skeletal muscle, spleen, thymus and thyroid. Not expressed in heart, liver and lung.

The protein localises to the endoplasmic reticulum membrane. It is found in the cytoplasm. It localises to the cytosol. Its subcellular location is the cell membrane. The protein resides in the cell projection. The protein localises to the filopodium tip. It is found in the nucleus membrane. Phosphoinositide-binding protein which associates with both cell and endoplasmic reticulum (ER) membranes. Can bind to the ER membrane protein VAPA and recruit VAPA to plasma membrane sites, thus linking these intracellular compartments. The ORP3-VAPA complex stimulates RRAS signaling which in turn attenuates integrin beta-1 (ITGB1) activation at the cell surface. With VAPA, may regulate ER morphology. Has a role in regulation of the actin cytoskeleton, cell polarity and cell adhesion. Binds to phosphoinositides with preference for PI(3,4)P2 and PI(3,4,5)P3. Also binds 25-hydroxycholesterol and cholesterol. This is Oxysterol-binding protein-related protein 3 (OSBPL3) from Homo sapiens (Human).